Here is a 425-residue protein sequence, read N- to C-terminus: Serine--tRNA ligase (425 aa).

230-232 contacts L-serine; it reads TAE. Position 261 to 263 (261 to 263) interacts with ATP; that stretch reads RSE. Glu284 serves as a coordination point for L-serine. 348–351 provides a ligand contact to ATP; that stretch reads EISS. Ser384 serves as a coordination point for L-serine.

This sequence belongs to the class-II aminoacyl-tRNA synthetase family. Type-1 seryl-tRNA synthetase subfamily. Homodimer. The tRNA molecule binds across the dimer.

It is found in the cytoplasm. It carries out the reaction tRNA(Ser) + L-serine + ATP = L-seryl-tRNA(Ser) + AMP + diphosphate + H(+). It catalyses the reaction tRNA(Sec) + L-serine + ATP = L-seryl-tRNA(Sec) + AMP + diphosphate + H(+). It participates in aminoacyl-tRNA biosynthesis; selenocysteinyl-tRNA(Sec) biosynthesis; L-seryl-tRNA(Sec) from L-serine and tRNA(Sec): step 1/1. Functionally, catalyzes the attachment of serine to tRNA(Ser). Is also able to aminoacylate tRNA(Sec) with serine, to form the misacylated tRNA L-seryl-tRNA(Sec), which will be further converted into selenocysteinyl-tRNA(Sec). The sequence is that of Serine--tRNA ligase from Streptococcus gordonii (strain Challis / ATCC 35105 / BCRC 15272 / CH1 / DL1 / V288).